The chain runs to 353 residues: Photosystem II D2 protein (353 aa).

Thr2 carries the post-translational modification N-acetylthreonine. At Thr2 the chain carries Phosphothreonine. The helical transmembrane segment at 41–61 (CAYFAVGGWFTGTTFVTSWYT) threads the bilayer. Position 118 (His118) interacts with chlorophyll a. A helical membrane pass occupies residues 125-141 (GFMLRQFELARSVQLRP). Residues Gln130 and Asn143 each coordinate pheophytin a. The helical transmembrane segment at 153–166 (VFVSVFLIYPLGQS) threads the bilayer. His198 is a chlorophyll a binding site. Residues 208–228 (AALLCAIHGATVENTLFEDGD) traverse the membrane as a helical segment. Residues His215 and Phe262 each contribute to the a plastoquinone site. Fe cation is bound at residue His215. Fe cation is bound at residue His269. Residues 279-295 (GLWMSALGVVGLALNLR) form a helical membrane-spanning segment.

The protein belongs to the reaction center PufL/M/PsbA/D family. In terms of assembly, PSII is composed of 1 copy each of membrane proteins PsbA, PsbB, PsbC, PsbD, PsbE, PsbF, PsbH, PsbI, PsbJ, PsbK, PsbL, PsbM, PsbT, PsbX, PsbY, PsbZ, Psb30/Ycf12, at least 3 peripheral proteins of the oxygen-evolving complex and a large number of cofactors. It forms dimeric complexes. The cofactor is The D1/D2 heterodimer binds P680, chlorophylls that are the primary electron donor of PSII, and subsequent electron acceptors. It shares a non-heme iron and each subunit binds pheophytin, quinone, additional chlorophylls, carotenoids and lipids. There is also a Cl(-1) ion associated with D1 and D2, which is required for oxygen evolution. The PSII complex binds additional chlorophylls, carotenoids and specific lipids..

The protein localises to the plastid. It is found in the chloroplast thylakoid membrane. The enzyme catalyses 2 a plastoquinone + 4 hnu + 2 H2O = 2 a plastoquinol + O2. Its function is as follows. Photosystem II (PSII) is a light-driven water:plastoquinone oxidoreductase that uses light energy to abstract electrons from H(2)O, generating O(2) and a proton gradient subsequently used for ATP formation. It consists of a core antenna complex that captures photons, and an electron transfer chain that converts photonic excitation into a charge separation. The D1/D2 (PsbA/PsbD) reaction center heterodimer binds P680, the primary electron donor of PSII as well as several subsequent electron acceptors. D2 is needed for assembly of a stable PSII complex. This Jasminum nudiflorum (Winter jasmine) protein is Photosystem II D2 protein.